We begin with the raw amino-acid sequence, 106 residues long: Putative protein LRRC37A5P (106 aa).

This is Putative protein LRRC37A5P (LRRC37A5P) from Homo sapiens (Human).